The sequence spans 198 residues: Nucleoid occlusion factor SlmA (198 aa).

The 61-residue stretch at 10–70 folds into the HTH tetR-type domain; sequence NRREEILQSL…SLIEFIEDSL (61 aa). Residues 33–52 constitute a DNA-binding region (H-T-H motif); it reads TTAKLAASVGVSEAALYRHF. A coiled-coil region spans residues 117 to 144; that stretch reads EQDRLQGRINQLFERIEAQLRQVLREKR.

The protein belongs to the nucleoid occlusion factor SlmA family. In terms of assembly, homodimer. Interacts with FtsZ.

The protein resides in the cytoplasm. It localises to the nucleoid. Functionally, required for nucleoid occlusion (NO) phenomenon, which prevents Z-ring formation and cell division over the nucleoid. Acts as a DNA-associated cell division inhibitor that binds simultaneously chromosomal DNA and FtsZ, and disrupts the assembly of FtsZ polymers. SlmA-DNA-binding sequences (SBS) are dispersed on non-Ter regions of the chromosome, preventing FtsZ polymerization at these regions. This chain is Nucleoid occlusion factor SlmA, found in Salmonella agona (strain SL483).